We begin with the raw amino-acid sequence, 684 residues long: Putative glucan endo-1,3-beta-glucosidase btgC (684 aa).

Over residues 1–10 (MAGVNRSFSY) the composition is skewed to polar residues. Disordered stretches follow at residues 1–38 (MAGV…LYST), 124–143 (AERD…APPD), and 157–182 (DSYS…TTPS). Over 1–302 (MAGVNRSFSY…HIIGGGSRKR (302 aa)) the chain is Cytoplasmic. Basic and acidic residues predominate over residues 12–32 (RGDDALLRDDEREISPLRSAE). Residues 303-323 (GWIVGLILAAVIVAAIVGGAV) form a helical; Signal-anchor for type II membrane protein membrane-spanning segment. At 324–684 (GGILGHQEHD…IPDCGGKTIT (361 aa)) the chain is on the extracellular side. The interval 330–358 (QEHDGDTSSSSSSSSSSGTGSGGSDKGDG) is disordered. Positions 336 to 347 (TSSSSSSSSSSG) are enriched in low complexity. N-linked (GlcNAc...) asparagine glycosylation is found at Asn-404, Asn-427, Asn-455, and Asn-474. Glu-487 serves as the catalytic Proton donor. The active-site Nucleophile is Glu-586. The N-linked (GlcNAc...) asparagine glycan is linked to Asn-631.

It belongs to the glycosyl hydrolase 17 family.

Its subcellular location is the cell membrane. The enzyme catalyses Hydrolysis of (1-&gt;3)-beta-D-glucosidic linkages in (1-&gt;3)-beta-D-glucans.. Its function is as follows. Glucanases play a role in cell expansion during growth, in cell-cell fusion during mating, and in spore release during sporulation. This enzyme may be involved in beta-glucan degradation. Active on laminarin and lichenan. This Aspergillus niger (strain ATCC MYA-4892 / CBS 513.88 / FGSC A1513) protein is Putative glucan endo-1,3-beta-glucosidase btgC (btgC).